A 146-amino-acid polypeptide reads, in one-letter code: Ribosome maturation factor RimP (146 aa).

The protein belongs to the RimP family.

It is found in the cytoplasm. Required for maturation of 30S ribosomal subunits. The chain is Ribosome maturation factor RimP from Helicobacter pylori (strain Shi470).